A 762-amino-acid chain; its full sequence is Polyribonucleotide nucleotidyltransferase (762 aa).

D531 and D537 together coordinate Mg(2+). Residues 597-656 form the KH domain; that stretch reads PRVTTIKVPVDKIGEVIGPKGKVINSITEETRAQISIEDDGTVFVGATDGPSAQAAIDKI. Residues 668-737 enclose the S1 motif domain; sequence GERFLGTVVK…KRGKISLVLV (70 aa).

Belongs to the polyribonucleotide nucleotidyltransferase family. Requires Mg(2+) as cofactor.

It localises to the cytoplasm. It catalyses the reaction RNA(n+1) + phosphate = RNA(n) + a ribonucleoside 5'-diphosphate. In terms of biological role, involved in mRNA degradation. Catalyzes the phosphorolysis of single-stranded polyribonucleotides processively in the 3'- to 5'-direction. This chain is Polyribonucleotide nucleotidyltransferase, found in Mycobacterium ulcerans (strain Agy99).